The chain runs to 282 residues: Undecaprenyl-diphosphatase (282 aa).

Helical transmembrane passes span 1–21 (MNLFQAIILGIIQGLTEFLPI), 40–60 (GAAFTAIIQIGTLAAVLIYFA), 89–109 (WMIAVGTIPIVVFGLTFKHEI), 112–132 (VLRSLYIVSASMIGLALVLVV), 153–173 (LSWTDAIIIGLAQAMALIPGS), 196–216 (FSFLLSLPSVFAAGMLELYQT), 228–248 (LNLAVATIAAFIFGYLSIAFL), and 258–278 (GIFIAYRLILGIGLIVMIGTG).

Belongs to the UppP family.

The protein localises to the cell inner membrane. It catalyses the reaction di-trans,octa-cis-undecaprenyl diphosphate + H2O = di-trans,octa-cis-undecaprenyl phosphate + phosphate + H(+). Catalyzes the dephosphorylation of undecaprenyl diphosphate (UPP). Confers resistance to bacitracin. This Chlorobaculum tepidum (strain ATCC 49652 / DSM 12025 / NBRC 103806 / TLS) (Chlorobium tepidum) protein is Undecaprenyl-diphosphatase.